Consider the following 600-residue polypeptide: Nisin transport ATP-binding protein NisT (600 aa).

5 helical membrane passes run 34–54, 69–89, 147–167, 168–188, and 260–280; these read AIYLIVLNAITAFVPLASLFI, LINIIIIYFIVQVITTVLGQL, AIIVELSSFISLLSSLFFIGT, WNIGVAILLLIVPVLSLVLFL, and IFLDFILNLINILTIFAMILS. The 284-residue stretch at 34-317 folds into the ABC transmembrane type-1 domain; it reads AIYLIVLNAI…MIQNIYIIYN (284 aa). The ABC transporter domain maps to 352–592; the sequence is VKVINLSYVY…CQYYQELYYS (241 aa). Position 386–393 (386–393) interacts with ATP; the sequence is GKNGSGKS.

This sequence belongs to the ABC transporter superfamily. Nisin exporter (TC 3.A.1.111.3) family.

The protein resides in the cell membrane. Probably implicated in the export process of the lantibiotic nisin. This chain is Nisin transport ATP-binding protein NisT (nisT), found in Lactococcus lactis subsp. lactis (Streptococcus lactis).